The chain runs to 720 residues: MIMFRSLSVTPVWKAGLSLSHRSIPINSRLSSVRNYISIGCANKTGSRLLRSAGVSSQYKDFRRFNSSSNGNGTDKNASVAPKTEVKKIVPPKPSTNGKSKTPTISELRIMKDLFKYIWPSGDNKVKIRVLIALALLIGAKLLNVQVPFFFKQTIDSMNIEWGPDVATVLPVAITMTILSYGAARFGAVMFGELRNAVFAKVAQNAIRKVSLQTFQHLMKLDLGWHLSRQTGGLTRAMDRGTKGISYVLSAMVFHMIPITFEISVVCGILTYQFGSSFAAMTFVTMLLYSFFTFKTTAWRTEFRRSANRADNKAASVALDSLINFEAVKYFNNEEYLANKYHQSLSKYRDSQIKVAQSLAFLNAGQNFIFTSALTAMMYMGASGVMEGALTVGDLVLINQLVFQLSVPLNFLGSVYRELKQSLIDMESLFKLQKNPILIKNTERPLMLPEHLPCEIKFENVTFGYQPDRNILKNATFTIAPGKKTAIVGPSGSGKSTILRLVFRFYDPQQGRILLDGKDIRELDLDELRRIVGVVPQDTPLFNDTIWENVKFGRINATDNEIVTAIEKAQLSDLIHKLPKGTETIVGERGLMISGGEKQRLAIARVLLKDTPIMFFDEATSALDTHTEQSLLKTIKENFSDVAKTSVYIAHRLRTIADADKIIVLENGAVREEGTHNALLANPNSLYSELWNIQENLDMLEDELEDELKLEKEPRTSKKD.

Residues 1–36 (MIMFRSLSVTPVWKAGLSLSHRSIPINSRLSSVRNY) constitute a mitochondrion transit peptide. The Mitochondrial matrix segment spans residues 37-129 (ISIGCANKTG…PSGDNKVKIR (93 aa)). Residues 64 to 77 (RFNSSSNGNGTDKN) are compositionally biased toward polar residues. The tract at residues 64–102 (RFNSSSNGNGTDKNASVAPKTEVKKIVPPKPSTNGKSKT) is disordered. A helical membrane pass occupies residues 130-151 (VLIALALLIGAKLLNVQVPFFF). Positions 130–421 (VLIALALLIG…LGSVYRELKQ (292 aa)) constitute an ABC transmembrane type-1 domain. Over 152–175 (KQTIDSMNIEWGPDVATVLPVAIT) the chain is Mitochondrial intermembrane. A helical membrane pass occupies residues 176–199 (MTILSYGAARFGAVMFGELRNAVF). Residues 200-248 (AKVAQNAIRKVSLQTFQHLMKLDLGWHLSRQTGGLTRAMDRGTKGISYV) lie on the Mitochondrial matrix side of the membrane. A helical transmembrane segment spans residues 249–272 (LSAMVFHMIPITFEISVVCGILTY). Position 273 (Gln273) is a topological domain, mitochondrial intermembrane. Residues 274–294 (FGSSFAAMTFVTMLLYSFFTF) traverse the membrane as a helical segment. Residues 295 to 360 (KTTAWRTEFR…SQIKVAQSLA (66 aa)) are Mitochondrial matrix-facing. Residues 300-304 (RTEFR) and 363-366 (NAGQ) each bind glutathione. The chain crosses the membrane as a helical span at residues 361–379 (FLNAGQNFIFTSALTAMMY). Residues 380–394 (MGASGVMEGALTVGD) lie on the Mitochondrial intermembrane side of the membrane. The chain crosses the membrane as a helical span at residues 395-416 (LVLINQLVFQLSVPLNFLGSVY). Residue Gly413 coordinates glutathione. Topologically, residues 417 to 720 (RELKQSLIDM…EKEPRTSKKD (304 aa)) are mitochondrial matrix. Residues 456–692 (IKFENVTFGY…PNSLYSELWN (237 aa)) enclose the ABC transporter domain. ATP is bound by residues Tyr465 and 489–500 (GPSGSGKSTILR).

It belongs to the ABC transporter superfamily. ABCB family. Heavy Metal importer (TC 3.A.1.210) subfamily. As to quaternary structure, homodimer.

It localises to the mitochondrion inner membrane. Functionally, performs an essential function in the generation of cytoplasmic iron-sulfur proteins by mediating the ATP-dependent export of Fe/S cluster precursors synthesized by NFS1 and other mitochondrial proteins. Hydrolyzes ATP. Binds glutathione and may function by transporting a glutathione-conjugated iron-sulfur compound. The protein is Iron-sulfur clusters transporter ATM1, mitochondrial of Kluyveromyces lactis (strain ATCC 8585 / CBS 2359 / DSM 70799 / NBRC 1267 / NRRL Y-1140 / WM37) (Yeast).